A 301-amino-acid polypeptide reads, in one-letter code: Protoheme IX farnesyltransferase (301 aa).

The next 8 helical transmembrane spans lie at Val30–Ile50, Ile55–Ile75, Ala106–Pro126, Leu127–Leu147, Trp152–Ala172, Phe177–Trp197, Ala233–Val253, and Phe281–Ile301.

It belongs to the UbiA prenyltransferase family. Protoheme IX farnesyltransferase subfamily.

It is found in the cell membrane. The enzyme catalyses heme b + (2E,6E)-farnesyl diphosphate + H2O = Fe(II)-heme o + diphosphate. It functions in the pathway porphyrin-containing compound metabolism; heme O biosynthesis; heme O from protoheme: step 1/1. Functionally, converts heme B (protoheme IX) to heme O by substitution of the vinyl group on carbon 2 of heme B porphyrin ring with a hydroxyethyl farnesyl side group. This chain is Protoheme IX farnesyltransferase, found in Sulfurisphaera tokodaii (strain DSM 16993 / JCM 10545 / NBRC 100140 / 7) (Sulfolobus tokodaii).